Reading from the N-terminus, the 577-residue chain is Probable L-gulonolactone oxidase 4 (577 aa).

The signal sequence occupies residues methionine 1–serine 17. Residues serine 46–methionine 228 enclose the FAD-binding PCMH-type domain.

The protein belongs to the oxygen-dependent FAD-linked oxidoreductase family. FAD is required as a cofactor.

It catalyses the reaction L-gulono-1,4-lactone + O2 = L-ascorbate + H2O2 + H(+). The protein operates within cofactor biosynthesis; L-ascorbate biosynthesis. May be involved in the biosynthesis of ascorbic acid. The sequence is that of Probable L-gulonolactone oxidase 4 from Arabidopsis thaliana (Mouse-ear cress).